Consider the following 84-residue polypeptide: Metallothionein-like protein 4A (84 aa).

The segment at 1–26 (MADTGKGSSVAGCNDSCGCPSPCPGG) is disordered.

Belongs to the metallothionein superfamily. Type 15 family. As to expression, expressed specifically in seeds.

It localises to the cytoplasm. Its subcellular location is the nucleus. The protein localises to the cell membrane. Functionally, metallothioneins have a high content of cysteine residues that bind various heavy metals. Functions as a metal chelator of copper (Cu) and zinc (Zn). Plays a role in storing and distributing Zn ion in seed. This chain is Metallothionein-like protein 4A (MT4A), found in Arabidopsis thaliana (Mouse-ear cress).